The chain runs to 167 residues: Small ribosomal subunit protein uS5 (167 aa).

The S5 DRBM domain occupies 12–75 (LEDNVVAINR…EAARKNLIEV (64 aa)).

It belongs to the universal ribosomal protein uS5 family. As to quaternary structure, part of the 30S ribosomal subunit. Contacts proteins S4 and S8.

With S4 and S12 plays an important role in translational accuracy. Its function is as follows. Located at the back of the 30S subunit body where it stabilizes the conformation of the head with respect to the body. In Levilactobacillus brevis (strain ATCC 367 / BCRC 12310 / CIP 105137 / JCM 1170 / LMG 11437 / NCIMB 947 / NCTC 947) (Lactobacillus brevis), this protein is Small ribosomal subunit protein uS5.